Here is a 485-residue protein sequence, read N- to C-terminus: Tektin-5 (485 aa).

Coiled-coil stretches lie at residues 113 to 185 (SRLT…EVNC), 225 to 251 (QQQMRKLAQRIDLQMRDNRDAQHALER), 342 to 385 (FNAR…MAKE), and 423 to 443 (DDTLQTLKLRLRETQDMLQLL).

This sequence belongs to the tektin family. Microtubule inner protein component of sperm flagellar doublet microtubules. Interacts with TEKT3. In terms of processing, ubiquitinated, leading to its degradation. Deubiquitinated by USP16, promoting its stability.

The protein localises to the cytoplasm. It localises to the cytoskeleton. The protein resides in the flagellum axoneme. Its function is as follows. Sperm-specific microtubule inner protein (MIP) part of the dynein-decorated doublet microtubules (DMTs) in flagellar axoneme. Forms an extensive interaction network in different conformations that reinforces the helix bundle composed by other tektin proteins (TEKT1 to TEKT4) and MIPs to anchor the tektin bundle onto the tubulin wall of A-tubule of the sperm flagellum. This chain is Tektin-5 (TEKT5), found in Macaca fascicularis (Crab-eating macaque).